The sequence spans 221 residues: FMN-dependent NADH:quinone oxidoreductase 1 (221 aa).

Residues 17–19 (SAS) and 148–151 (SSGG) contribute to the FMN site.

It belongs to the azoreductase type 1 family. As to quaternary structure, homodimer. The cofactor is FMN.

It carries out the reaction 2 a quinone + NADH + H(+) = 2 a 1,4-benzosemiquinone + NAD(+). It catalyses the reaction N,N-dimethyl-1,4-phenylenediamine + anthranilate + 2 NAD(+) = 2-(4-dimethylaminophenyl)diazenylbenzoate + 2 NADH + 2 H(+). Quinone reductase that provides resistance to thiol-specific stress caused by electrophilic quinones. Functionally, also exhibits azoreductase activity. Catalyzes the reductive cleavage of the azo bond in aromatic azo compounds to the corresponding amines. The chain is FMN-dependent NADH:quinone oxidoreductase 1 from Clostridium acetobutylicum (strain ATCC 824 / DSM 792 / JCM 1419 / IAM 19013 / LMG 5710 / NBRC 13948 / NRRL B-527 / VKM B-1787 / 2291 / W).